Reading from the N-terminus, the 55-residue chain is uncharacterized protein (55 aa).

This is an uncharacterized protein from Bacillus subtilis (strain 168).